A 96-amino-acid polypeptide reads, in one-letter code: Small ribosomal subunit protein uS19 (96 aa).

It belongs to the universal ribosomal protein uS19 family.

Functionally, protein S19 forms a complex with S13 that binds strongly to the 16S ribosomal RNA. In Gemmatimonas aurantiaca (strain DSM 14586 / JCM 11422 / NBRC 100505 / T-27), this protein is Small ribosomal subunit protein uS19.